A 628-amino-acid polypeptide reads, in one-letter code: Chaperone protein HtpG (628 aa).

An a; substrate-binding region spans residues 1-337 (MSEKKYTFET…SADLPLNVSR (337 aa)). The b stretch occupies residues 338 to 554 (EILQHNKVID…DYGMSLHMQK (217 aa)). The interval 555 to 628 (MMEEAGQGFM…FVKLVNKYIR (74 aa)) is c.

Belongs to the heat shock protein 90 family. As to quaternary structure, homodimer.

It is found in the cytoplasm. In terms of biological role, molecular chaperone. Has ATPase activity. The polypeptide is Chaperone protein HtpG (Francisella tularensis subsp. novicida (strain U112)).